The primary structure comprises 92 residues: UPF0473 protein OB2006 (92 aa).

This sequence belongs to the UPF0473 family.

This chain is UPF0473 protein OB2006, found in Oceanobacillus iheyensis (strain DSM 14371 / CIP 107618 / JCM 11309 / KCTC 3954 / HTE831).